Reading from the N-terminus, the 485-residue chain is Aspartyl/glutamyl-tRNA(Asn/Gln) amidotransferase subunit B (485 aa).

The protein belongs to the GatB/GatE family. GatB subfamily. Heterotrimer of A, B and C subunits.

It carries out the reaction L-glutamyl-tRNA(Gln) + L-glutamine + ATP + H2O = L-glutaminyl-tRNA(Gln) + L-glutamate + ADP + phosphate + H(+). The enzyme catalyses L-aspartyl-tRNA(Asn) + L-glutamine + ATP + H2O = L-asparaginyl-tRNA(Asn) + L-glutamate + ADP + phosphate + 2 H(+). Functionally, allows the formation of correctly charged Asn-tRNA(Asn) or Gln-tRNA(Gln) through the transamidation of misacylated Asp-tRNA(Asn) or Glu-tRNA(Gln) in organisms which lack either or both of asparaginyl-tRNA or glutaminyl-tRNA synthetases. The reaction takes place in the presence of glutamine and ATP through an activated phospho-Asp-tRNA(Asn) or phospho-Glu-tRNA(Gln). This Bordetella petrii (strain ATCC BAA-461 / DSM 12804 / CCUG 43448) protein is Aspartyl/glutamyl-tRNA(Asn/Gln) amidotransferase subunit B.